Here is a 554-residue protein sequence, read N- to C-terminus: Hedycaryol synthase (554 aa).

(2E,6E)-farnesyl diphosphate-binding residues include Arg-270, Asp-307, Asp-311, Arg-449, and Asp-452. Residues Asp-307 and Asp-311 each contribute to the Mg(2+) site. The DDXXD motif signature appears at Asp-307 to Asp-311. The Mg(2+) site is built by Asp-452, Ser-456, and Glu-460.

Belongs to the terpene synthase family. It depends on Mg(2+) as a cofactor. In terms of tissue distribution, specifically expressed in flowers.

It carries out the reaction (2E,6E)-farnesyl diphosphate + H2O = (2E,6E)-hedycaryol + diphosphate. The protein operates within secondary metabolite biosynthesis; terpenoid biosynthesis. Functionally, sesquiterpene synthase that catalyzes the formation of sesquiterpenes and sesquiterpenoid alcohols. Converts farnesyl diphosphate (FPP) to hedycaryol. Hedycaryol is likely to be one of the terpenes that attract insects for pollination of Camellia brevistyla. This chain is Hedycaryol synthase, found in Camellia brevistyla.